The chain runs to 349 residues: MKVGIVSWGAYIPKYRIRTEEVARIWGDDPLRIVDVYLVDEKSVEGIDEDAVTIAVEAARRAIRRAGIDPKKIGAVYAGTESKPYAVKPISSILVDALGLSNNVFAVDMEFACKAGSEGLVAAIGLVKAGQVEYGMTVGTDTSQGEPGEHLEYSASSGGVALIVGRDGVAAELEAVYSYVSDTPDFWRREGSPYPMHGEGFTGEPAYFRHIIGAAKGLMEKYGYKPSDFAYVVFHQPNGRFPVRAASMLNIPMEKIKPGIVVTHIGNTYNASALMGFAKVLDVAKPGDKILLVPFGSGAGSNAFVFTVTDVVQERQKTGVPTVEDMLRDKIYVDYAQYLKMRKMIKLFD.

Position 29 (Asp29) interacts with (3S)-3-hydroxy-3-methylglutaryl-CoA. Glu81 functions as the Proton donor/acceptor in the catalytic mechanism. Residues Cys113, Ser154, Thr202, and His235 each contribute to the (3S)-3-hydroxy-3-methylglutaryl-CoA site. Cys113 serves as the catalytic Acyl-thioester intermediate. The Proton donor/acceptor role is filled by His235. CoA is bound at residue Arg240. Residues Arg244, Asn267, and Ser297 each coordinate (3S)-3-hydroxy-3-methylglutaryl-CoA.

Belongs to the thiolase-like superfamily. Archaeal HMG-CoA synthase family. As to quaternary structure, interacts with acetoacetyl-CoA thiolase that catalyzes the precedent step in the pathway and with a DUF35 protein. The acetoacetyl-CoA thiolase/HMG-CoA synthase complex channels the intermediate via a fused CoA-binding site, which allows for efficient coupling of the endergonic thiolase reaction with the exergonic HMGCS reaction.

The catalysed reaction is acetoacetyl-CoA + acetyl-CoA + H2O = (3S)-3-hydroxy-3-methylglutaryl-CoA + CoA + H(+). Its pathway is metabolic intermediate biosynthesis; (R)-mevalonate biosynthesis; (R)-mevalonate from acetyl-CoA: step 2/3. In terms of biological role, catalyzes the condensation of acetyl-CoA with acetoacetyl-CoA to form 3-hydroxy-3-methylglutaryl-CoA (HMG-CoA). Functions in the mevalonate (MVA) pathway leading to isopentenyl diphosphate (IPP), a key precursor for the biosynthesis of isoprenoid compounds that are building blocks of archaeal membrane lipids. The chain is Hydroxymethylglutaryl-CoA synthase from Pyrobaculum arsenaticum (strain DSM 13514 / JCM 11321 / PZ6).